Here is a 463-residue protein sequence, read N- to C-terminus: Cysteine--tRNA ligase (463 aa).

C29 serves as a coordination point for Zn(2+). The 'HIGH' region signature appears at 31–41 (PTVYDFAHIGN). C227, H252, and E256 together coordinate Zn(2+). The 'KMSKS' region signature appears at 285-289 (KMSKS). K288 provides a ligand contact to ATP.

The protein belongs to the class-I aminoacyl-tRNA synthetase family. Monomer. The cofactor is Zn(2+).

It localises to the cytoplasm. It catalyses the reaction tRNA(Cys) + L-cysteine + ATP = L-cysteinyl-tRNA(Cys) + AMP + diphosphate. The polypeptide is Cysteine--tRNA ligase (Rhodopseudomonas palustris (strain BisA53)).